Consider the following 277-residue polypeptide: Large ribosomal subunit protein uL2 (277 aa).

2 disordered regions span residues 36 to 55 (PLPK…RHHG) and 213 to 277 (WKGI…RKKK).

The protein belongs to the universal ribosomal protein uL2 family. Part of the 50S ribosomal subunit. Forms a bridge to the 30S subunit in the 70S ribosome.

In terms of biological role, one of the primary rRNA binding proteins. Required for association of the 30S and 50S subunits to form the 70S ribosome, for tRNA binding and peptide bond formation. It has been suggested to have peptidyltransferase activity; this is somewhat controversial. Makes several contacts with the 16S rRNA in the 70S ribosome. In Staphylococcus aureus (strain bovine RF122 / ET3-1), this protein is Large ribosomal subunit protein uL2.